A 482-amino-acid polypeptide reads, in one-letter code: Cytochrome P450 monooxygenase pynD (482 aa).

An N-terminal signal peptide occupies residues 1-22 (MWRIPVIVALVAGLLYWVRKQG). A glycan (N-linked (GlcNAc...) asparagine) is linked at Asn-401. Cys-417 is a heme binding site.

It belongs to the cytochrome P450 family. It depends on heme as a cofactor.

It participates in secondary metabolite biosynthesis. Its function is as follows. Cytochrome P450 monooxygenase; part of the gene cluster that mediates the biosynthesis of pyranonigrins, a family of antioxidative compounds. The first step of pyranonigrins biosynthesis is performed by the hybrid PKS-NRPS synthetase that condenses 6 malonyl-CoA units to an acetyl starter unit, to form a 1,3,5-trioxotetradecane-6,8-dienyl-ACP. The enoyl reductase (ER) domain of pynA is likely to be functional during the first two rounds of polyketide chain extension, to generate the saturated C-C bonds of the alkyl side chain. PynA subsequently forms the amide bond between the acyl chain and L-serine. Although pynA has a terminal reductase domain, it appears to require the thioesterase pynI for the release of the straight-chain intermediate from pynA via the formation of a tetramic acid pyranonigrin J. The methyltransferase pynC then coverts pyranonigrin J to pyranonigrin I via N-methylation. The FAD-dependent monooxygenase pynG catalyzes an epoxidation-mediated cyclization to form the dihydro-gamma-pyrone moiety, followed by pynD-catalyzed oxidation of the alcohol to the ketone and enolization to yield the characteristic tetramic acid-fused gamma-pyrone core of pyranonigrin H. Pyranonigrin H is substrate of pynH for dehydration-mediated exo-methylene formation from the serine side chain to produce pyranonigrin E, before the oxidase pynE reduces the exo-methylene of pyranonigrin E into a pendant methyl to form pyranonigrin G. The FAD-linked oxidoreductase pynB performs the reverse reaction and converts pyranonigrin G back to pyranonigrin E. The protein is Cytochrome P450 monooxygenase pynD of Aspergillus niger (strain ATCC MYA-4892 / CBS 513.88 / FGSC A1513).